Reading from the N-terminus, the 631-residue chain is tRNA uridine 5-carboxymethylaminomethyl modification enzyme MnmG (631 aa).

FAD contacts are provided by residues glycine 13 to glycine 18, valine 125, and serine 180. Glycine 273–phenylalanine 287 serves as a coordination point for NAD(+). Glutamine 370 provides a ligand contact to FAD.

It belongs to the MnmG family. In terms of assembly, homodimer. Heterotetramer of two MnmE and two MnmG subunits. The cofactor is FAD.

It is found in the cytoplasm. Its function is as follows. NAD-binding protein involved in the addition of a carboxymethylaminomethyl (cmnm) group at the wobble position (U34) of certain tRNAs, forming tRNA-cmnm(5)s(2)U34. This Vibrio campbellii (strain ATCC BAA-1116) protein is tRNA uridine 5-carboxymethylaminomethyl modification enzyme MnmG.